A 260-amino-acid polypeptide reads, in one-letter code: Tropinone reductase homolog At1g07450 (260 aa).

NADP(+) is bound at residue 14 to 38; sequence LVTGGSKGIGYAIVEELVGFGARVH. Ser-147 is a substrate binding site. The Proton acceptor role is filled by Tyr-159.

Belongs to the short-chain dehydrogenases/reductases (SDR) family. SDR65C subfamily.

The protein is Tropinone reductase homolog At1g07450 of Arabidopsis thaliana (Mouse-ear cress).